Consider the following 578-residue polypeptide: Acyl-coenzyme A synthetase ACSM5, mitochondrial (578 aa).

The N-terminal 22 residues, 1 to 22 (MRLWLRGLVYQARRSSWGVFRI), are a transit peptide targeting the mitochondrion. Lys-96 carries the post-translational modification N6-acetyllysine; alternate. Lys-96 is modified (N6-succinyllysine; alternate). Residue Lys-151 is modified to N6-acetyllysine. 229 to 237 (TSGTTGTPK) is an ATP binding site. Lys-335 carries the N6-acetyllysine modification. Residues 367–372 (EGYGQS), Asp-454, Arg-469, and Lys-565 contribute to the ATP site.

Belongs to the ATP-dependent AMP-binding enzyme family. It depends on Mg(2+) as a cofactor. Requires Mn(2+) as cofactor.

It is found in the mitochondrion matrix. The catalysed reaction is a medium-chain fatty acid + ATP + CoA = a medium-chain fatty acyl-CoA + AMP + diphosphate. Functionally, catalyzes the activation of fatty acids by CoA to produce an acyl-CoA, the first step in fatty acid metabolism. This is Acyl-coenzyme A synthetase ACSM5, mitochondrial (Acsm5) from Rattus norvegicus (Rat).